The sequence spans 206 residues: RILP-like protein 2 (206 aa).

The interval 1–29 (MEEPPLREEEEEEEEDEAGPEGALGKSPL) is disordered. The span at 8-19 (EEEEEEEEDEAG) shows a compositional bias: acidic residues. Residues 19–108 (GPEGALGKSP…RREGSAAGPE (90 aa)) form the RH1 domain. Residues 67–159 (LEMLETLVNE…VQEELQCYKS (93 aa)) are a coiled coil. The RH2 domain occupies 125–197 (RPRFTLQELR…KEEKTIIRKL (73 aa)). The segment at 161-189 (LIPPREGPGGRREKEALFPRGSNANSNKE) is disordered. Positions 168–177 (PGGRREKEAL) are enriched in basic and acidic residues.

It belongs to the RILPL family. Homodimer. Interacts with RAC1. Interacts (via N-terminus) with MYO5A, the interaction is required for its role in dendrite formation. Interacts with RAB8A; interaction is dependent on the phosphorylation of RAB8A on 'Thr-72'. Interacts with RAB10 and RAB12; interaction is dependent on the phosphorylation of 'Thr-73' on RAB10 and 'Ser-105' on RAB12.

The protein localises to the cytoplasm. It is found in the cytosol. Its subcellular location is the cytoskeleton. The protein resides in the microtubule organizing center. It localises to the centrosome. The protein localises to the cell projection. It is found in the cilium. Its function is as follows. Involved in cell shape and neuronal morphogenesis, positively regulating the establishment and maintenance of dendritic spines. Plays a role in cellular protein transport, including protein transport away from primary cilia. May function via activation of RAC1 and PAK1. The chain is RILP-like protein 2 (RILPL2) from Bos taurus (Bovine).